A 186-amino-acid chain; its full sequence is UPF0397 protein SGO_0469 (186 aa).

5 helical membrane passes run 14-34 (VVAT…SIPT), 50-70 (LFGV…GHAL), 77-97 (GNPW…VGLL), 119-139 (AQFV…DILI), and 152-172 (VVAT…LLIA).

This sequence belongs to the UPF0397 family.

Its subcellular location is the cell membrane. The sequence is that of UPF0397 protein SGO_0469 from Streptococcus gordonii (strain Challis / ATCC 35105 / BCRC 15272 / CH1 / DL1 / V288).